Here is a 580-residue protein sequence, read N- to C-terminus: Methyl-CpG-binding domain protein 4 (580 aa).

A disordered region spans residues 1-36; the sequence is MGTTGLESLSLGDRGAAPTVTSSERLVPDPPNDLRK. Residues 76–148 form the MBD domain; the sequence is ATAGTECRKS…EDFDFTVLSK (73 aa). Phosphoserine is present on residues S318 and S428. Residue D560 is part of the active site.

In terms of assembly, interacts with MLH1.

It is found in the nucleus. Functionally, mismatch-specific DNA N-glycosylase involved in DNA repair. Has thymine glycosylase activity and is specific for G:T mismatches within methylated and unmethylated CpG sites. Can also remove uracil or 5-fluorouracil in G:U mismatches. Has no lyase activity. Was first identified as methyl-CpG-binding protein. The sequence is that of Methyl-CpG-binding domain protein 4 from Homo sapiens (Human).